The following is a 736-amino-acid chain: Microtubule-associated protein mu-2 (736 aa).

It belongs to the orthoreovirus mu-2 protein family. Interacts with protein mu-NS; in viral inclusions. Interacts with polymerase lambda-3; this interaction stimulates the ATPase activity of mu-2. A divalent metal cation is required as a cofactor.

The protein resides in the virion. It localises to the host cytoplasm. It is found in the host cytoskeleton. Functionally, minor inner capsid (core) component. Displays NTPase and RNA 5'-triphosphatase (RTPase) activities. ATP is the preferred substrate for hydrolysis. May function as a cofactor of polymerase lambda-3. Associates with microtubules and plays a role in the formation, structural organization and morphology of viral inclusions, where the assembly of cores and the replication of viral RNA occur. Together with mu-NS, recruits the other core proteins to these inclusions. The protein is Microtubule-associated protein mu-2 (M1) of Mammalia (T3D).